A 78-amino-acid chain; its full sequence is uncharacterized protein (78 aa).

This is an uncharacterized protein from Plasmodium falciparum (isolate fcm17 / Senegal).